A 224-amino-acid polypeptide reads, in one-letter code: BOS complex subunit TMEM147 (224 aa).

The helical transmembrane segment at 1–21 threads the bilayer; that stretch reads MTLFHFGNCFALAYFPYFITY. Residues 22 to 34 lie on the Cytoplasmic side of the membrane; sequence KCSGLSEYNAFWK. Residues 35-58 traverse the membrane as a helical segment; it reads CVQAGVTYLFVQLCKMLFLATFFP. At 59-66 the chain is on the lumenal side; sequence TWEGGIYD. Residues 67–88 traverse the membrane as a helical segment; the sequence is FIGEFMKASVDVADLIGLNLVM. Residues 89–98 lie on the Cytoplasmic side of the membrane; sequence SRNAGKGEYK. A helical membrane pass occupies residues 99 to 124; that stretch reads IMVAALGWATAELIMSRCIPLWVGAR. The Lumenal segment spans residues 125–129; it reads GIEFD. The helical transmembrane segment at 130-155 threads the bilayer; that stretch reads WKYIQMSIDSNISLVHYIVASAQVWM. Residues 156-164 are Cytoplasmic-facing; sequence ITRYDLYHT. Residues 165–187 traverse the membrane as a helical segment; that stretch reads FRPAVLLLMFLSVYKAFVMETFV. The Lumenal segment spans residues 188–194; that stretch reads HLCSLGS. Residues 195 to 216 traverse the membrane as a helical segment; sequence WTALLARAVVTGLLALSTLALY. Over 217 to 224 the chain is Cytoplasmic; it reads VAVVNVHS.

The protein belongs to the TMEM147 family. In terms of assembly, component of the back of Sec61 (BOS) complex, composed of NCLN/Nicalin, NOMO1 and TMEM147. The BOS complex is part of the multi-pass translocon (MPT) complex, composed of three subcomplexes, the GEL complex (composed of RAB5IF/OPTI and TMCO1), the BOS complex (composed of NCLN/Nicalin, NOMO1 and TMEM147) and the PAT complex (composed of WDR83OS/Asterix and CCDC47). The MPT complex associates with the SEC61 complex. Interacts with CHRM3, CHRM1 and AVPR2. Interacts with LBR; promoting LBR localization to the nucleus inner membrane. Interacts with DHCR7.

It is found in the endoplasmic reticulum membrane. The protein resides in the nucleus membrane. It localises to the cell membrane. Functionally, component of the multi-pass translocon (MPT) complex that mediates insertion of multi-pass membrane proteins into the lipid bilayer of membranes. The MPT complex takes over after the SEC61 complex: following membrane insertion of the first few transmembrane segments of proteins by the SEC61 complex, the MPT complex occludes the lateral gate of the SEC61 complex to promote insertion of subsequent transmembrane regions. Also acts as a negative regulator of CHRM3 function, most likely by interfering with its trafficking to the cell membrane. Negatively regulates CHRM3-mediated calcium mobilization and activation of RPS6KA1/p90RSK activity. Regulates LBR localization to the nucleus inner membrane. The sequence is that of BOS complex subunit TMEM147 from Canis lupus familiaris (Dog).